The sequence spans 62 residues: Photosystem II reaction center protein Z (62 aa).

Helical transmembrane passes span 8–28 (ALIG…VAYA) and 41–61 (WVGS…NFFV).

Belongs to the PsbZ family. PSII is composed of 1 copy each of membrane proteins PsbA, PsbB, PsbC, PsbD, PsbE, PsbF, PsbH, PsbI, PsbJ, PsbK, PsbL, PsbM, PsbT, PsbX, PsbY, PsbZ, Psb30/Ycf12, peripheral proteins PsbO, CyanoQ (PsbQ), PsbU, PsbV and a large number of cofactors. It forms dimeric complexes.

Its subcellular location is the cellular thylakoid membrane. Its function is as follows. May control the interaction of photosystem II (PSII) cores with the light-harvesting antenna, regulates electron flow through the 2 photosystem reaction centers. PSII is a light-driven water plastoquinone oxidoreductase, using light energy to abstract electrons from H(2)O, generating a proton gradient subsequently used for ATP formation. This Nostoc punctiforme (strain ATCC 29133 / PCC 73102) protein is Photosystem II reaction center protein Z.